The following is a 226-amino-acid chain: ATP synthase F(0) complex subunit a (226 aa).

The next 6 helical transmembrane spans lie at 6 to 26 (FASF…IIMF), 68 to 88 (WSLM…LGLL), 97 to 117 (QLSM…ITGF), 138 to 158 (IPML…ALAV), 164 to 184 (ITAG…LTSI), and 189 to 209 (AILT…VALI).

This sequence belongs to the ATPase A chain family. Component of the ATP synthase complex composed at least of ATP5F1A/subunit alpha, ATP5F1B/subunit beta, ATP5MC1/subunit c (homooctomer), MT-ATP6/subunit a, MT-ATP8/subunit 8, ATP5ME/subunit e, ATP5MF/subunit f, ATP5MG/subunit g, ATP5MK/subunit k, ATP5MJ/subunit j, ATP5F1C/subunit gamma, ATP5F1D/subunit delta, ATP5F1E/subunit epsilon, ATP5PF/subunit F6, ATP5PB/subunit b, ATP5PD/subunit d, ATP5PO/subunit OSCP. ATP synthase complex consists of a soluble F(1) head domain (subunits alpha(3) and beta(3)) - the catalytic core - and a membrane F(0) domain - the membrane proton channel (subunits c, a, 8, e, f, g, k and j). These two domains are linked by a central stalk (subunits gamma, delta, and epsilon) rotating inside the F1 region and a stationary peripheral stalk (subunits F6, b, d, and OSCP). Interacts with DNAJC30; interaction is direct.

It is found in the mitochondrion inner membrane. The enzyme catalyses H(+)(in) = H(+)(out). In terms of biological role, subunit a, of the mitochondrial membrane ATP synthase complex (F(1)F(0) ATP synthase or Complex V) that produces ATP from ADP in the presence of a proton gradient across the membrane which is generated by electron transport complexes of the respiratory chain. ATP synthase complex consist of a soluble F(1) head domain - the catalytic core - and a membrane F(1) domain - the membrane proton channel. These two domains are linked by a central stalk rotating inside the F(1) region and a stationary peripheral stalk. During catalysis, ATP synthesis in the catalytic domain of F(1) is coupled via a rotary mechanism of the central stalk subunits to proton translocation. With the subunit c (ATP5MC1), forms the proton-conducting channel in the F(0) domain, that contains two crucial half-channels (inlet and outlet) that facilitate proton movement from the mitochondrial intermembrane space (IMS) into the matrix. Protons are taken up via the inlet half-channel and released through the outlet half-channel, following a Grotthuss mechanism. This chain is ATP synthase F(0) complex subunit a, found in Ictidomys tridecemlineatus (Thirteen-lined ground squirrel).